The primary structure comprises 160 residues: Leucokinin (160 aa).

The first 19 residues, 1–19 (MAKIVLCMVLLAFGRQVYG), serve as a signal peptide directing secretion. Residues 20 to 130 (ASLVPAPISE…RIKSQLQRDE (111 aa)) constitute a propeptide that is removed on maturation. A Glycine amide modification is found at Gly-147. A propeptide spanning residues 151 to 160 (SPEPPILPDY) is cleaved from the precursor.

The protein resides in the secreted. In terms of biological role, acts through intracellular calcium in Malpighian tubule stellate cells to raise chloride conductance. In Drosophila melanogaster (Fruit fly), this protein is Leucokinin (Lk).